Reading from the N-terminus, the 196-residue chain is 3-isopropylmalate dehydratase small subunit (196 aa).

The protein belongs to the LeuD family. LeuD type 1 subfamily. In terms of assembly, heterodimer of LeuC and LeuD.

It catalyses the reaction (2R,3S)-3-isopropylmalate = (2S)-2-isopropylmalate. The protein operates within amino-acid biosynthesis; L-leucine biosynthesis; L-leucine from 3-methyl-2-oxobutanoate: step 2/4. In terms of biological role, catalyzes the isomerization between 2-isopropylmalate and 3-isopropylmalate, via the formation of 2-isopropylmaleate. The polypeptide is 3-isopropylmalate dehydratase small subunit (Herpetosiphon aurantiacus (strain ATCC 23779 / DSM 785 / 114-95)).